Reading from the N-terminus, the 425-residue chain is Glutamate-1-semialdehyde 2,1-aminomutase (425 aa).

N6-(pyridoxal phosphate)lysine is present on lysine 265.

The protein belongs to the class-III pyridoxal-phosphate-dependent aminotransferase family. HemL subfamily. As to quaternary structure, homodimer. Pyridoxal 5'-phosphate is required as a cofactor.

The protein localises to the cytoplasm. The catalysed reaction is (S)-4-amino-5-oxopentanoate = 5-aminolevulinate. It participates in porphyrin-containing compound metabolism; protoporphyrin-IX biosynthesis; 5-aminolevulinate from L-glutamyl-tRNA(Glu): step 2/2. This chain is Glutamate-1-semialdehyde 2,1-aminomutase, found in Opitutus terrae (strain DSM 11246 / JCM 15787 / PB90-1).